A 5654-amino-acid polypeptide reads, in one-letter code: Mucin-5AC (5654 aa).

The signal sequence occupies residues 1–27 (MSVGRRKLALLWALALALACTRHTGHA). Residues 27-49 (AQDGSSESSYKHHPALSPIARGP) form a disordered region. The VWFD 1 domain occupies 79 to 249 (RVCSTWGSFH…KMDDPTDQCQ (171 aa)). 2 cysteine pairs are disulfide-bonded: Cys81/Cys211 and Cys103/Cys248. Glu198 is a binding site for Cu(2+). Residues Asn205 and Asn258 are each glycosylated (N-linked (GlcNAc...) asparagine). His320 and His367 together coordinate Cu(2+). One can recognise a TIL 1 domain in the interval 338–394 (CPNNMQYHECRSPCADTCSNQEHSRACEDHCVAGCFCPEGTVLDDIGQTGCVPVSKC). The region spanning 394–465 (CACVYNGAAY…CSYVLTKPCD (72 aa)) is the VWFC 1 domain. Asn415 is a glycosylation site (N-linked (GlcNAc...) asparagine). The 176-residue stretch at 432–607 (GTCSVLGGAH…NTFKTQAACP (176 aa)) folds into the VWFD 2 domain. 3 cysteine pairs are disulfide-bonded: Cys434-Cys571, Cys456-Cys606, and Cys478-Cys486. N-linked (GlcNAc...) asparagine glycosylation occurs at Asn524. 2 consecutive TIL domains span residues 704–761 (CPKS…ASNC) and 818–863 (DTGA…AEDC). Positions 901 to 1072 (ATCAVYGDGH…NSWKLSPSCP (172 aa)) constitute a VWFD 3 domain. 4 cysteine pairs are disulfide-bonded: Cys903–Cys1036, Cys925–Cys1071, Cys934–Cys1033, and Cys953–Cys960. N-linked (GlcNAc...) asparagine glycosylation occurs at Asn1308. Positions 1336–1377 (LVVSSTHTPSNGPSSAHTGPPSSAWPTTAGTSPRTRLPTASA) are disordered. Residues 1338-1377 (VSSTHTPSNGPSSAHTGPPSSAWPTTAGTSPRTRLPTASA) show a composition bias toward polar residues. The stretch at 1383–1481 (CGEKCLWSPW…RVQCCTPLPC (99 aa)) is one Cys-rich subdomain 1 repeat. The interval 1383–4731 (CGEKCLWSPW…VLCCETPRGC (3349 aa)) is 9 X Cys-rich subdomain repeats. C-linked (Man) tryptophan glycosylation is present at Trp1389. Composition is skewed to low complexity over residues 1483-1539 (TSSS…TFST) and 1547-1575 (ATSTSSMSTTAPGTSVVSSKPTPTEPSTS). The segment at 1483–1575 (TSSSPAQTTP…KPTPTEPSTS (93 aa)) is disordered. A Cys-rich subdomain 2 repeat occupies 1577-1677 (CLQELCTWTE…IQCCETVNVC (101 aa)). Residue Trp1584 is glycosylated (C-linked (Man) tryptophan). The interval 1688-1733 (ATTRPTPHPTGAQTQTTFTTHMPSASTEQPTATSRGGPTATSVTQG) is disordered. Low complexity predominate over residues 1697 to 1707 (TGAQTQTTFTT). Residues 1708 to 1733 (HMPSASTEQPTATSRGGPTATSVTQG) are compositionally biased toward polar residues. A Cys-rich subdomain 3 repeat occupies 1743-1847 (CHPRCTWTKW…VLCCETPRGC (105 aa)). Trp1749 carries a C-linked (Man) tryptophan glycan. Residues 1849 to 1948 (MTSTPGSTSS…KPTPTEPSTS (100 aa)) form a disordered region. Composition is skewed to low complexity over residues 1850–1912 (TSTP…TFST) and 1920–1948 (ATSTSSMSTTAPGTSVVSSKPTPTEPSTS). One copy of the Cys-rich subdomain 4 repeat lies at 1950–2050 (CLQELCTWTE…IQCCETVNVC (101 aa)). C-linked (Man) tryptophan glycosylation is present at Trp1957. Positions 2059-2110 (TVATTRPTPHPTGAQTQTTFTTHMPSASTEQPTATSRGGPTATSVTQGTHTT) are disordered. Low complexity predominate over residues 2070–2080 (TGAQTQTTFTT). Residues 2081-2110 (HMPSASTEQPTATSRGGPTATSVTQGTHTT) are compositionally biased toward polar residues. The stretch at 2116–2220 (CHPRCTWTTW…VLCCETPKGC (105 aa)) is one Cys-rich subdomain 5 repeat. A glycan (C-linked (Man) tryptophan) is linked at Trp2122. Residues 2224-2234 (STPVTAPSTPS) show a composition bias toward low complexity. The disordered stretch occupies residues 2224 to 3214 (STPVTAPSTP…SHVSISKTTH (991 aa)). Positions 2235–2249 (GRATSPTQSTSSWQK) are enriched in polar residues. 2 stretches are compositionally biased toward low complexity: residues 2250-3184 (SRTT…TPGP) and 3192-3214 (PTTSTASVSKTSTSHVSISKTTH). Residues 2257 to 3200 (TTSTTSTPQT…VPTTSTASVS (944 aa)) are 107 X 8 AA approximate tandem repeats of T-T-S-T-T-S-A-P. O-linked (GalNAc) threonine glycosylation is found at Thr2395, Thr2405, Thr2451, Thr2461, Thr2531, Thr2541, Thr2571, Thr2581, Thr2699, Thr2709, Thr2883, Thr2893, Thr2979, Thr2989, Thr3067, and Thr3077. One copy of the Cys-rich subdomain 6 repeat lies at 3222 to 3326 (CHLRCTWTKW…VLCCETPKGC (105 aa)). The C-linked (Man) tryptophan glycan is linked to Trp3228. Residues 3329–3340 (TSTPVTAPSTPS) show a composition bias toward low complexity. The segment at 3329 to 3515 (TSTPVTAPST…SVSKTTHSQP (187 aa)) is disordered. Residues 3341–3355 (GRATSPTQSTSSWQK) show a composition bias toward polar residues. Low complexity predominate over residues 3356–3513 (SRTTTLVTTS…HVSVSKTTHS (158 aa)). A 17 X 8 AA approximate tandem repeats of T-T-S-T-T-S-A-P region spans residues 3363–3498 (TTSTTSTPQT…VTTTSTASVS (136 aa)). A Cys-rich subdomain 7 repeat occupies 3520 to 3660 (CHPRCTWTKW…WQKSRTTTLV (141 aa)). Trp3526 carries a C-linked (Man) tryptophan glycan. Residues 3628-3638 (STSVTAPSTPS) show a composition bias toward low complexity. The tract at residues 3628-3951 (STSVTAPSTP…KTTHSQPVTR (324 aa)) is disordered. Positions 3639–3660 (GRATSPTQSTSSWQKSRTTTLV) are enriched in polar residues. A 34 X 8 AA approximate tandem repeats of T-T-S-T-T-S-A-P region spans residues 3661–3931 (TSSITSTTQT…VPTTSTASVS (271 aa)). The span at 3661 to 3946 (TSSITSTTQT…HVSVSKTTHS (286 aa)) shows a compositional bias: low complexity. Asn3774 is a glycosylation site (N-linked (GlcNAc...) asparagine). The stretch at 3953-4057 (CHPRCTWTKW…VLCCETPKGC (105 aa)) is one Cys-rich subdomain 8 repeat. Trp3959 carries a C-linked (Man) tryptophan glycan. A compositionally biased stretch (low complexity) spans 4060–4071 (TSTPVTAPSTPS). Residues 4060-4625 (TSTPVTAPST…KTTHSQPVTS (566 aa)) are disordered. Residues 4072-4088 (GRATSPTQSTSSWQKSR) show a composition bias toward polar residues. Over residues 4089–4610 (TTTLVTTSTT…TTPVSKTSTS (522 aa)) the composition is skewed to low complexity. Positions 4093–4595 (VTTSTTSTPQ…TSGPGTTPSP (503 aa)) are 58 X 8 AA approximate tandem repeats of T-T-S-T-T-S-A-P. O-linked (GalNAc) threonine glycosylation is found at Thr4224, Thr4234, Thr4296, Thr4306, Thr4320, Thr4330, Thr4376, Thr4386, Thr4440, Thr4450, Thr4480, Thr4490, Thr4512, Thr4522, Thr4568, and Thr4578. The segment covering 4611 to 4624 (HLSVSKTTHSQPVT) has biased composition (polar residues). Residues 4627 to 4731 (CHPLCAWTKW…VLCCETPRGC (105 aa)) form a Cys-rich subdomain 9 repeat. Trp4633 is a glycosylation site (C-linked (Man) tryptophan). The disordered stretch occupies residues 4830 to 4849 (TLPPAPATSPSISTSEPVTE). The region spanning 4852-4918 (CPNAVPPRKK…DGCCHHYQCQ (67 aa)) is the VWFC 2 domain. Asn4869 and Asn4942 each carry an N-linked (GlcNAc...) asparagine glycan. The region spanning 4919-5103 (CVCSGWGDPH…VSIPDQPACH (185 aa)) is the VWFD 4 domain. 3 cysteine pairs are disulfide-bonded: Cys4921/Cys5063, Cys4943/Cys5102, and Cys4967/Cys4975. N-linked (GlcNAc...) asparagine glycosylation is found at Asn5057, Asn5093, and Asn5236. Residues 5276 to 5345 (PRCLGPHGEP…GQCCPQYSCA (70 aa)) form the VWFC 3 domain. N-linked (GlcNAc...) asparagine glycosylation is found at Asn5347, Asn5377, Asn5386, Asn5455, and Asn5528. One can recognise a VWFC 4 domain in the interval 5381–5448 (TVCSINGTLY…QSGQCCGTCV (68 aa)). Disulfide bonds link Cys5532–Cys5582, Cys5546–Cys5596, Cys5557–Cys5612, and Cys5561–Cys5614. The region spanning 5532–5620 (CAVYHRSLII…ECGCMGRRCP (89 aa)) is the CTCK domain. Asn5591 carries N-linked (GlcNAc...) asparagine glycosylation. Residues 5622-5654 (PGDTQHSEEAEPEPSQEAESGSWERGVPVSPMH) are disordered.

As to quaternary structure, homomultimer; disulfide-linked. The N- and C-terminus mediate their assembly into higher order structures to form filaments. The CTCK domains of two polypeptides associate in the endoplasmic reticulum to generate intermolecularly disulfide-bonded dimers. These dimers progress to the Golgi apparatus, which is a more acidic environment than the endoplasmic reticulum. Under acidic conditions, the N-termini form non-covalent intermolecular interactions that juxtapose assemblies from different CTCK-linked dimers to produce long, disulfide-linked polymers that remain highly compact until secretion. C-, O- and N-glycosylated. O-glycosylated on the second and last Thr of the Thr-/Ser-rich tandem repeats TTPSPVPTTSTTSA. One form of glycosylation is also known as Lewis B (LeB) blood group antigen, a tetrasaccharide consisting of N-acetylglucosamine having a fucosyl residue attached. It has a role as an epitope and antigen and functions as a receptor for H.pylori binding and facilitates infection. C-mannosylation in the Cys-rich subdomains may be required for proper folding of these regions and for export from the endoplasmic reticulum during biosynthesis. Post-translationally, proteolytic cleavage in the C-terminal is initiated early in the secretory pathway and does not involve a serine protease. The extent of cleavage is increased in the acidic parts of the secretory pathway. Cleavage generates a reactive group which could link the protein to a primary amide. As to expression, highly expressed in surface mucosal cells of respiratory tract and stomach epithelia. Overexpressed in a number of carcinomas. Also expressed in Barrett's esophagus epithelium and in the proximal duodenum.

It localises to the secreted. In terms of biological role, gel-forming glycoprotein of gastric and respiratory tract epithelia that protects the mucosa from infection and chemical damage by binding to inhaled microorganisms and particles that are subsequently removed by the mucociliary system. Interacts with H.pylori in the gastric epithelium, Barrett's esophagus as well as in gastric metaplasia of the duodenum (GMD). In Homo sapiens (Human), this protein is Mucin-5AC.